The sequence spans 104 residues: MFEGFDFSKMGQMLEDVQKQAKQMEEESKNKEFGAKSGGGLVSVRANGSGEILDISIDDSLLEDKESMQILLISAINDVLKSVEADKKNTASRMLGGLASMGIK.

Residues 16-34 (DVQKQAKQMEEESKNKEFG) are compositionally biased toward basic and acidic residues. A disordered region spans residues 16–38 (DVQKQAKQMEEESKNKEFGAKSG).

The protein belongs to the YbaB/EbfC family. In terms of assembly, homodimer.

It is found in the cytoplasm. It localises to the nucleoid. Functionally, binds to DNA and alters its conformation. May be involved in regulation of gene expression, nucleoid organization and DNA protection. In Campylobacter concisus (strain 13826), this protein is Nucleoid-associated protein Ccon26_18480.